Reading from the N-terminus, the 408-residue chain is Glucose-1-phosphate adenylyltransferase (408 aa).

Alpha-D-glucose 1-phosphate-binding positions include Y100, G165, 180–181 (EK), and S198.

It belongs to the bacterial/plant glucose-1-phosphate adenylyltransferase family. Homotetramer.

It carries out the reaction alpha-D-glucose 1-phosphate + ATP + H(+) = ADP-alpha-D-glucose + diphosphate. It functions in the pathway glycan biosynthesis; glycogen biosynthesis. Its function is as follows. Involved in the biosynthesis of ADP-glucose, a building block required for the elongation reactions to produce glycogen. Catalyzes the reaction between ATP and alpha-D-glucose 1-phosphate (G1P) to produce pyrophosphate and ADP-Glc. The sequence is that of Glucose-1-phosphate adenylyltransferase from Cutibacterium acnes (strain DSM 16379 / KPA171202) (Propionibacterium acnes).